The chain runs to 92 residues: Protein S100-B (92 aa).

N-acetylserine is present on Ser2. EF-hand domains are found at residues Asp13–Ile48 and Lys49–Ala84. Zn(2+) is bound at residue His16. 2 residues coordinate Ca(2+): Ser19 and Glu22. Residue His26 participates in Zn(2+) binding. Ca(2+) contacts are provided by Lys27, Glu32, Asp62, Asp64, Asp66, Glu68, and Glu73. The Zn(2+) site is built by His86 and His91.

It belongs to the S-100 family. In terms of assembly, dimer of either two alpha chains, or two beta chains, or one alpha and one beta chain. The S100B dimer binds two molecules of STK38. Interacts with CACYBP in a calcium-dependent manner. Interacts with ATAD3A; this interaction probably occurs in the cytosol prior to ATAD3A mitochondrial targeting. Interacts with S100A6. The S100B dimer interacts with two molecules of CAPZA1. Interacts with AGER. Interacts with PPP5C (via TPR repeats); the interaction is calcium-dependent and modulates PPP5C activity. Interacts with TPPP; this interaction inhibits TPPP dimerization. Interacts with isoform CLSTN3beta of CLSTN3; interaction promotes secretion. In terms of tissue distribution, although predominant among the water-soluble brain proteins, S100 is also found in a variety of other tissues.

The protein resides in the cytoplasm. The protein localises to the nucleus. Its subcellular location is the secreted. Functionally, small zinc- and- and calcium-binding protein that is highly expressed in astrocytes and constitutes one of the most abundant soluble proteins in brain. Weakly binds calcium but binds zinc very tightly-distinct binding sites with different affinities exist for both ions on each monomer. Physiological concentrations of potassium ion antagonize the binding of both divalent cations, especially affecting high-affinity calcium-binding sites. Acts as a neurotrophic factor that promotes astrocytosis and axonal proliferation. Involved in innervation of thermogenic adipose tissue by acting as an adipocyte-derived neurotrophic factor that promotes sympathetic innervation of adipose tissue. Binds to and initiates the activation of STK38 by releasing autoinhibitory intramolecular interactions within the kinase. Interaction with AGER after myocardial infarction may play a role in myocyte apoptosis by activating ERK1/2 and p53/TP53 signaling. Could assist ATAD3A cytoplasmic processing, preventing aggregation and favoring mitochondrial localization. May mediate calcium-dependent regulation on many physiological processes by interacting with other proteins, such as TPR-containing proteins, and modulating their activity. This is Protein S100-B from Rattus norvegicus (Rat).